Here is a 368-residue protein sequence, read N- to C-terminus: Endophilin-A2 (368 aa).

The membrane-binding amphipathic helix stretch occupies residues 1–21; that stretch reads MSVAGLKKQFYKASQLVSEKV. In terms of domain architecture, BAR spans 18–249; that stretch reads SEKVGGAEGT…LKRRVREASS (232 aa). The segment at 60–87 is required for dimerization upon membrane association; sequence PNPASRAKLTMLNTVSKIRGQVKNPGYP. Positions 180–250 form a coiled coil; it reads DEELRQALEK…KRRVREASSR (71 aa). Positions 218–254 are interaction with ARC; sequence LVDAQLDYHRQAVQILEELADKLKRRVREASSRPRRE. The tract at residues 243 to 309 is disordered; sequence RVREASSRPR…SKSMPPLDQP (67 aa). The span at 245–261 shows a compositional bias: basic and acidic residues; the sequence is REASSRPRREFKPRPQE. Serine 288 is modified (phosphoserine). Threonine 298 is subject to Phosphothreonine. The region spanning 306–365 is the SH3 domain; sequence LDQPSCKALYDFEPENDGELGFREGDLITLTNQIDENWYEGMLHGQSGFFPLSYVQVLVP. Tyrosine 315 is modified (phosphotyrosine).

Belongs to the endophilin family. Interacts with ARC, SYNJ1 and DNM1. Interacts with PDCD6IP. Interacts with BIN2. Detected in brain and testis (at protein level). Ubiquitous.

It localises to the cytoplasm. The protein resides in the early endosome membrane. Its subcellular location is the cell projection. The protein localises to the podosome. In terms of biological role, implicated in endocytosis. May recruit other proteins to membranes with high curvature. The protein is Endophilin-A2 (Sh3gl1) of Rattus norvegicus (Rat).